The primary structure comprises 101 residues: Small ribosomal subunit protein uS14 (101 aa).

The protein belongs to the universal ribosomal protein uS14 family. Part of the 30S ribosomal subunit. Contacts proteins S3 and S10.

Functionally, binds 16S rRNA, required for the assembly of 30S particles and may also be responsible for determining the conformation of the 16S rRNA at the A site. This chain is Small ribosomal subunit protein uS14, found in Actinobacillus succinogenes (strain ATCC 55618 / DSM 22257 / CCUG 43843 / 130Z).